The following is a 265-amino-acid chain: Ribosomal RNA small subunit methyltransferase A (265 aa).

S-adenosyl-L-methionine-binding residues include H13, L15, G40, E61, D85, and N103.

The protein belongs to the class I-like SAM-binding methyltransferase superfamily. rRNA adenine N(6)-methyltransferase family. RsmA subfamily.

The protein localises to the cytoplasm. The catalysed reaction is adenosine(1518)/adenosine(1519) in 16S rRNA + 4 S-adenosyl-L-methionine = N(6)-dimethyladenosine(1518)/N(6)-dimethyladenosine(1519) in 16S rRNA + 4 S-adenosyl-L-homocysteine + 4 H(+). Specifically dimethylates two adjacent adenosines (A1518 and A1519) in the loop of a conserved hairpin near the 3'-end of 16S rRNA in the 30S particle. May play a critical role in biogenesis of 30S subunits. The protein is Ribosomal RNA small subunit methyltransferase A of Bordetella bronchiseptica (strain ATCC BAA-588 / NCTC 13252 / RB50) (Alcaligenes bronchisepticus).